Reading from the N-terminus, the 249-residue chain is (2S)-[(R)-hydroxy(phenyl)methyl]succinyl-CoA dehydrogenase subunit BbsC (249 aa).

Belongs to the short-chain dehydrogenases/reductases (SDR) family. Heterotetramer composed of 2 inactive BbsC subunits and 2 active BbsD subunits.

It participates in xenobiotic degradation; toluene degradation. Involved in an anaerobic toluene degradation pathway. Catalytically inactive subunit, which is probably required for the structural and/or regulatory integrity of the catalytic subunit BbsD. This subunit cannot bind NAD(+) or substrate. This chain is (2S)-[(R)-hydroxy(phenyl)methyl]succinyl-CoA dehydrogenase subunit BbsC, found in Thauera aromatica.